Reading from the N-terminus, the 496-residue chain is Beta-amylase (496 aa).

Substrate-binding residues include D54, H94, and D102. E187 serves as the catalytic Proton donor. Substrate is bound by residues K296, H301, and T343. Residue E381 is the Proton acceptor of the active site. Substrate contacts are provided by residues N382–A383 and R421.

Belongs to the glycosyl hydrolase 14 family.

The catalysed reaction is Hydrolysis of (1-&gt;4)-alpha-D-glucosidic linkages in polysaccharides so as to remove successive maltose units from the non-reducing ends of the chains.. This is Beta-amylase (BMY1) from Vigna unguiculata (Cowpea).